The sequence spans 207 residues: Imidazole glycerol phosphate synthase subunit HisH (207 aa).

The 207-residue stretch at 1 to 207 folds into the Glutamine amidotransferase type-1 domain; the sequence is MIAIVDYNMG…ENFTKYRNLK (207 aa). The Nucleophile role is filled by cysteine 79. Catalysis depends on residues histidine 185 and glutamate 187.

Heterodimer of HisH and HisF.

It is found in the cytoplasm. The enzyme catalyses 5-[(5-phospho-1-deoxy-D-ribulos-1-ylimino)methylamino]-1-(5-phospho-beta-D-ribosyl)imidazole-4-carboxamide + L-glutamine = D-erythro-1-(imidazol-4-yl)glycerol 3-phosphate + 5-amino-1-(5-phospho-beta-D-ribosyl)imidazole-4-carboxamide + L-glutamate + H(+). The catalysed reaction is L-glutamine + H2O = L-glutamate + NH4(+). The protein operates within amino-acid biosynthesis; L-histidine biosynthesis; L-histidine from 5-phospho-alpha-D-ribose 1-diphosphate: step 5/9. In terms of biological role, IGPS catalyzes the conversion of PRFAR and glutamine to IGP, AICAR and glutamate. The HisH subunit catalyzes the hydrolysis of glutamine to glutamate and ammonia as part of the synthesis of IGP and AICAR. The resulting ammonia molecule is channeled to the active site of HisF. This is Imidazole glycerol phosphate synthase subunit HisH from Sulfurimonas denitrificans (strain ATCC 33889 / DSM 1251) (Thiomicrospira denitrificans (strain ATCC 33889 / DSM 1251)).